Reading from the N-terminus, the 432-residue chain is T-box transcription factor T (432 aa).

Residues Leu49–Asp217 constitute a DNA-binding region (T-box). Residues Cys274 to Ser306 are disordered. Over residues Thr293–Ser306 the composition is skewed to polar residues.

In terms of assembly, when not bound to DNA, exists as a monomer. Binds DNA as a dimer. As to expression, expressed in presumptive mesodermal cells around the blastopore, and then in the notochord.

The protein localises to the nucleus. Involved in the transcriptional regulation of genes required for mesoderm formation and differentiation. Binds to the palindromic T site 5'-TTCACACCTAGGTGTGAA-3' DNA sequence. Causes dorsal mesodermal differentiation of animal cap ectoderm when co-expressed with wnt8 and noggin. None of these molecules causes dorsal mesoderm formation when expressed alone. Establishes the left/right axis at early gastrula stage by directly up-regulating mesodermal expression of zic3. The sequence is that of T-box transcription factor T from Xenopus laevis (African clawed frog).